We begin with the raw amino-acid sequence, 272 residues long: Ribonuclease 3 (272 aa).

Polar residues predominate over residues 1 to 20 (MTDDVTNVEQPSTASEQQPQ). A disordered region spans residues 1–38 (MTDDVTNVEQPSTASEQQPQDVPAAEPSAAKKRRANKA). The RNase III domain occupies 44 to 171 (AAAIEQRLGH…VIGAIYLDGG (128 aa)). E84 contributes to the Mg(2+) binding site. D88 is a catalytic residue. Mg(2+) is bound by residues D157 and E160. E160 is a catalytic residue. The 70-residue stretch at 196–265 (DPKTVLQEWA…ASAMLAREGV (70 aa)) folds into the DRBM domain.

The protein belongs to the ribonuclease III family. Homodimer. Requires Mg(2+) as cofactor.

The protein resides in the cytoplasm. It catalyses the reaction Endonucleolytic cleavage to 5'-phosphomonoester.. Digests double-stranded RNA. Involved in the processing of primary rRNA transcript to yield the immediate precursors to the large and small rRNAs (23S and 16S). Processes some mRNAs, and tRNAs when they are encoded in the rRNA operon. Processes pre-crRNA and tracrRNA of type II CRISPR loci if present in the organism. This is Ribonuclease 3 from Rhodopseudomonas palustris (strain ATCC BAA-98 / CGA009).